Consider the following 330-residue polypeptide: Glycerol-3-phosphate dehydrogenase [NAD(P)+] 1 (330 aa).

3 residues coordinate NADPH: tryptophan 15, arginine 35, and lysine 105. Residues lysine 105, glycine 133, and threonine 135 each coordinate sn-glycerol 3-phosphate. An NADPH-binding site is contributed by alanine 137. Positions 188, 241, 251, 252, and 253 each coordinate sn-glycerol 3-phosphate. Lysine 188 serves as the catalytic Proton acceptor. Arginine 252 provides a ligand contact to NADPH. Residues isoleucine 276 and glutamate 278 each contribute to the NADPH site.

The protein belongs to the NAD-dependent glycerol-3-phosphate dehydrogenase family.

The protein resides in the cytoplasm. The enzyme catalyses sn-glycerol 3-phosphate + NAD(+) = dihydroxyacetone phosphate + NADH + H(+). It carries out the reaction sn-glycerol 3-phosphate + NADP(+) = dihydroxyacetone phosphate + NADPH + H(+). The protein operates within membrane lipid metabolism; glycerophospholipid metabolism. Functionally, catalyzes the reduction of the glycolytic intermediate dihydroxyacetone phosphate (DHAP) to sn-glycerol 3-phosphate (G3P), the key precursor for phospholipid synthesis. This is Glycerol-3-phosphate dehydrogenase [NAD(P)+] 1 from Sphingopyxis alaskensis (strain DSM 13593 / LMG 18877 / RB2256) (Sphingomonas alaskensis).